The sequence spans 148 residues: UPF0756 membrane protein YeaL (148 aa).

The next 4 helical transmembrane spans lie at 14–34, 51–71, 86–106, and 112–132; these read ALGF…LIIV, LSIG…SGTL, LVAI…VTLM, and LVAG…GVPV.

This sequence belongs to the UPF0756 family.

It localises to the cell membrane. This is UPF0756 membrane protein YeaL from Escherichia coli O157:H7.